Reading from the N-terminus, the 335-residue chain is S-adenosylmethionine:tRNA ribosyltransferase-isomerase (335 aa).

It belongs to the QueA family. Monomer.

It is found in the cytoplasm. The enzyme catalyses 7-aminomethyl-7-carbaguanosine(34) in tRNA + S-adenosyl-L-methionine = epoxyqueuosine(34) in tRNA + adenine + L-methionine + 2 H(+). It functions in the pathway tRNA modification; tRNA-queuosine biosynthesis. Functionally, transfers and isomerizes the ribose moiety from AdoMet to the 7-aminomethyl group of 7-deazaguanine (preQ1-tRNA) to give epoxyqueuosine (oQ-tRNA). In Thermosipho africanus (strain TCF52B), this protein is S-adenosylmethionine:tRNA ribosyltransferase-isomerase.